A 307-amino-acid chain; its full sequence is Mitochondrial brown fat uncoupling protein 1 (307 aa).

The Mitochondrial intermembrane segment spans residues 1-10; that stretch reads MVSLTTSEVH. Residues 11–32 traverse the membrane as a helical segment; that stretch reads PTMGVKTFSAGISACLADIITF. Solcar repeat units lie at residues 11–102, 111–201, and 210–295; these read PTMG…VQEY, PTLG…MKGA, and DDVP…LKKE. The Mitochondrial matrix segment spans residues 33–73; the sequence is PLDTAKVRLQIQGEGQTSSTIRYKGVLGTITTLAKTEGWPK. Residue Lys-56 participates in fatty acid 16:0 binding. Residues 74 to 96 form a helical membrane-spanning segment; that stretch reads LYSGLPAGIQRQISFASLRIGLY. Residues 97 to 116 lie on the Mitochondrial intermembrane side of the membrane; the sequence is DTVQEYFSSGKETPPTLGNR. Residues 117–133 form a helical membrane-spanning segment; the sequence is ISAGLMTGGVAVFIGQP. Over 134–178 the chain is Mitochondrial matrix; sequence TEVVKVRLQAQSHLHGIKPRYTGTYNAYRIIATTESFSTLWKGTT. The chain crosses the membrane as a helical span at residues 179-195; that stretch reads PNLMRNVIINRTELVTY. Topologically, residues 196 to 212 are mitochondrial intermembrane; it reads DLMKGALVNNQILADDV. A helical membrane pass occupies residues 213 to 232; that stretch reads PCHLLSALVAGFCTTFLASP. The Mitochondrial matrix portion of the chain corresponds to 233–266; sequence ADVVKTRFINSLPGQYPSVPSCAMTMLTKEGPTA. A Cysteine sulfenic acid (-SOH) modification is found at Cys-254. The chain crosses the membrane as a helical span at residues 267 to 289; that stretch reads FFKGFVPSFLRLASWNVIMFVCF. Lys-269 contributes to the fatty acid 16:0 binding site. Topologically, residues 290–307 are mitochondrial intermembrane; it reads EQLKKELMKSRQTMDCTT.

The protein belongs to the mitochondrial carrier (TC 2.A.29) family. As to quaternary structure, most probably functions as a monomer. Binds one purine nucleotide per monomer. However, has also been suggested to function as a homodimer or a homotetramer. Tightly associates with cardiolipin in the mitochondrion inner membrane; may stabilize and regulate its activity. Post-translationally, may undergo sulfenylation upon cold exposure. May increase the sensitivity of UCP1 thermogenic function to the activation by noradrenaline probably through structural effects. In terms of processing, may undergo ubiquitin-mediated proteasomal degradation.

Its subcellular location is the mitochondrion inner membrane. The enzyme catalyses H(+)(in) = H(+)(out). Has no constitutive proton transporter activity and has to be activated by long-chain fatty acids/LCFAs. Inhibited by purine nucleotides. Both purine nucleotides and LCFAs bind the cytosolic side of the transporter and directly compete to activate or inhibit it. Activated by noradrenaline and reactive oxygen species. Despite lacking canonical translational encoding for selenocysteine, a small pool of the protein has been observed to selectively incorporate selenocysteine at 'Cys-254'. Selenocysteine-modified protein is highly sensitive to redox modification and may constitute a pool of protein highly sensitive to activation by elevated levels of reactive oxygen species (ROS). Its function is as follows. Mitochondrial protein responsible for thermogenic respiration, a specialized capacity of brown adipose tissue and beige fat that participates in non-shivering adaptive thermogenesis to temperature and diet variations and more generally to the regulation of energy balance. Functions as a long-chain fatty acid/LCFA and proton symporter, simultaneously transporting one LCFA and one proton through the inner mitochondrial membrane. However, LCFAs remaining associated with the transporter via their hydrophobic tails, it results in an apparent transport of protons activated by LCFAs. Thereby, dissipates the mitochondrial proton gradient and converts the energy of substrate oxydation into heat instead of ATP. Regulates the production of reactive oxygen species/ROS by mitochondria. The sequence is that of Mitochondrial brown fat uncoupling protein 1 from Dicrostonyx groenlandicus (Northern collared lemming).